We begin with the raw amino-acid sequence, 309 residues long: Biotin synthase (309 aa).

The 225-residue stretch at 35 to 259 (NKIQISSLLS…MIPKSYIRLS (225 aa)) folds into the Radical SAM core domain. [4Fe-4S] cluster contacts are provided by Cys-50, Cys-54, and Cys-57. Cys-94, Cys-125, Cys-185, and Arg-257 together coordinate [2Fe-2S] cluster.

The protein belongs to the radical SAM superfamily. Biotin synthase family. In terms of assembly, homodimer. [4Fe-4S] cluster serves as cofactor. [2Fe-2S] cluster is required as a cofactor.

It catalyses the reaction (4R,5S)-dethiobiotin + (sulfur carrier)-SH + 2 reduced [2Fe-2S]-[ferredoxin] + 2 S-adenosyl-L-methionine = (sulfur carrier)-H + biotin + 2 5'-deoxyadenosine + 2 L-methionine + 2 oxidized [2Fe-2S]-[ferredoxin]. It functions in the pathway cofactor biosynthesis; biotin biosynthesis; biotin from 7,8-diaminononanoate: step 2/2. Its function is as follows. Catalyzes the conversion of dethiobiotin (DTB) to biotin by the insertion of a sulfur atom into dethiobiotin via a radical-based mechanism. The chain is Biotin synthase from Rickettsia felis (strain ATCC VR-1525 / URRWXCal2) (Rickettsia azadi).